We begin with the raw amino-acid sequence, 156 residues long: Ribonuclease pancreatic (156 aa).

The signal sequence occupies residues 1–28 (MALEKSLVLLPLLVLILLVLGWVQPSLG). Over residues 33 to 43 (AKKFQRQHVDS) the composition is skewed to basic and acidic residues. Positions 33–53 (AKKFQRQHVDSDSSPSSSSTY) are disordered. Residues lysine 35 and arginine 38 each contribute to the substrate site. Histidine 40 (proton acceptor) is an active-site residue. 4 disulfides stabilise this stretch: cysteine 54-cysteine 112, cysteine 68-cysteine 123, cysteine 86-cysteine 138, and cysteine 93-cysteine 100. Asparagine 62 carries an N-linked (GlcNAc...) asparagine glycan. Substrate-binding positions include 69-73 (KPVNT) and lysine 94. Asparagine 104 carries N-linked (GlcNAc...) asparagine glycosylation. Arginine 113 contributes to the substrate binding site. Residue asparagine 116 is glycosylated (N-linked (GlcNAc...) asparagine). Catalysis depends on histidine 147, which acts as the Proton donor.

Belongs to the pancreatic ribonuclease family. In terms of assembly, monomer. Interacts with and forms tight 1:1 complexes with RNH1. Dimerization of two such complexes may occur. Interaction with RNH1 inhibits this protein. Pancreas and other tissues and body fluids (indicating it may have other physiological functions besides its role in digestion).

It localises to the secreted. The enzyme catalyses an [RNA] containing cytidine + H2O = an [RNA]-3'-cytidine-3'-phosphate + a 5'-hydroxy-ribonucleotide-3'-[RNA].. The catalysed reaction is an [RNA] containing uridine + H2O = an [RNA]-3'-uridine-3'-phosphate + a 5'-hydroxy-ribonucleotide-3'-[RNA].. In terms of biological role, endonuclease that catalyzes the cleavage of RNA on the 3' side of pyrimidine nucleotides. Acts on single-stranded and double-stranded RNA. In Pan troglodytes (Chimpanzee), this protein is Ribonuclease pancreatic (RNASE1).